The chain runs to 359 residues: MRQILFAAGIALAVSILLTPVLIKAFSRQGFGQEIRVEGPASHQSKRGTPTMGGVAILAGLWAGYWGSHLIGIGYDADGPSASGLLVLGLTTALGGVGFLDDFIKIRKQRNLGLNKTAKLVGQLIAAVAFGILALQFRGANDLTPGSEHLSYVRDIATVTMGSVVFVAFCYLLVSAWSNAVNLTDGLDGLAAGSMSLVLGAYVIITFWQYRNACETSPGKGCYDVRDPLDLALICAAGAGACIGFLWWNAAPAKIFMGDTGSLALGGMLAGLSITTRTELLMVVIGALFVAEAASVVIQVAVFRSSRRRVFRMAPFHHHFELAGWAETTVIIRFWLLAAIASAIGLALFYSEYLAAIGG.

Helical transmembrane passes span Q3–I23, G53–I73, G84–I104, T117–F137, I156–A176, L187–F207, L231–A251, I255–T275, V283–F303, and V330–Y350.

It belongs to the glycosyltransferase 4 family. MraY subfamily. Mg(2+) is required as a cofactor.

The protein localises to the cell membrane. It carries out the reaction UDP-N-acetyl-alpha-D-muramoyl-L-alanyl-gamma-D-glutamyl-meso-2,6-diaminopimeloyl-D-alanyl-D-alanine + di-trans,octa-cis-undecaprenyl phosphate = di-trans,octa-cis-undecaprenyl diphospho-N-acetyl-alpha-D-muramoyl-L-alanyl-D-glutamyl-meso-2,6-diaminopimeloyl-D-alanyl-D-alanine + UMP. Its pathway is cell wall biogenesis; peptidoglycan biosynthesis. In terms of biological role, catalyzes the initial step of the lipid cycle reactions in the biosynthesis of the cell wall peptidoglycan: transfers peptidoglycan precursor phospho-MurNAc-pentapeptide from UDP-MurNAc-pentapeptide onto the lipid carrier undecaprenyl phosphate, yielding undecaprenyl-pyrophosphoryl-MurNAc-pentapeptide, known as lipid I. In Rhodococcus opacus (strain B4), this protein is Phospho-N-acetylmuramoyl-pentapeptide-transferase.